The primary structure comprises 145 residues: Large ribosomal subunit protein uL13 (145 aa).

This sequence belongs to the universal ribosomal protein uL13 family. Part of the 50S ribosomal subunit.

This protein is one of the early assembly proteins of the 50S ribosomal subunit, although it is not seen to bind rRNA by itself. It is important during the early stages of 50S assembly. The protein is Large ribosomal subunit protein uL13 of Staphylococcus carnosus (strain TM300).